Here is a 590-residue protein sequence, read N- to C-terminus: MHPIKLCARSPRPSSKKRKRPAAAAATPPESEPEPVHNTAACNSEGENNATGKRREHNNKKMKEEKSKRKKKQGEGKKGSGILTDKLFSDLPISDLTANAIRDMNYTHLTEIQARSIPPLMLGSDVMASAKTGSGKTLAFLIPAIELLCRLRFSPRNGTGVIVLCPTRELAIQTHNVAKELMRYHSQTLGYVIGGIDLRGEAEQLAKGINVLVATPGRLLDHMQKTKSFKYECLKCLIIDEADRILEQNFEEQMKQIFKLLPRQGRQTVLFSATQTEKVEDFAKLTFGSKEERQRTLVYVGVDDHESKATVEGLKQGYCVIPSERRFLVLYAFLKKALSEKTKVMVFFSSCNSVKFHAQLLNFIQIECYDIHGQLKQHQRTSTFFKFHKAEHGILLCTNVAARGLDIPDVDYIVQYDPPDETKDYIHRVGRTARGDNGKGSAILFLLPKELQLLIHLKAANISVSEYVFRQELVPKLQPYLHYDSSFEQEKIVGGNYILNRSAKEAYKSYLLAYKSHSMKDIFAIHQLDLTSVAASFCFSEPPKVNLDLESSASKHRKKRNVNTGRRHGIGPSNPYGRKGSDDRRQFARF.

Residues Met1 to Gly81 form a disordered region. The span at Ala40–Thr51 shows a compositional bias: polar residues. Residues Asn59–Lys78 are compositionally biased toward basic and acidic residues. The Q motif motif lies at Lys86 to Ala114. The Helicase ATP-binding domain maps to Ile117–Arg293. Residue Ala130–Thr137 participates in ATP binding. The DEAD box motif lies at Asp240–Asp243. The 153-residue stretch at Val329 to Leu481 folds into the Helicase C-terminal domain. Residues Leu549–Phe590 form a disordered region. A compositionally biased stretch (basic residues) spans Ser554 to Gly569. Basic and acidic residues predominate over residues Lys579–Phe590.

It belongs to the DEAD box helicase family. DDX18/HAS1 subfamily.

It carries out the reaction ATP + H2O = ADP + phosphate + H(+). In Oryza sativa subsp. japonica (Rice), this protein is Putative DEAD-box ATP-dependent RNA helicase 51.